A 417-amino-acid chain; its full sequence is Gamma-glutamyl phosphate reductase (417 aa).

Belongs to the gamma-glutamyl phosphate reductase family.

The protein localises to the cytoplasm. The catalysed reaction is L-glutamate 5-semialdehyde + phosphate + NADP(+) = L-glutamyl 5-phosphate + NADPH + H(+). It participates in amino-acid biosynthesis; L-proline biosynthesis; L-glutamate 5-semialdehyde from L-glutamate: step 2/2. Catalyzes the NADPH-dependent reduction of L-glutamate 5-phosphate into L-glutamate 5-semialdehyde and phosphate. The product spontaneously undergoes cyclization to form 1-pyrroline-5-carboxylate. This is Gamma-glutamyl phosphate reductase from Escherichia coli O8 (strain IAI1).